A 464-amino-acid polypeptide reads, in one-letter code: MMACRDPKPGAKRLVRAQTLQKQRRAPVGPRAPPPDEEDPRLKCKNCGAFGHMARSTRCPMKCWKAALVPPTLGKKEGKENLKPWKPQVEANPGPLNKDKGEKEERPRQQDPQRKALLHIFSGKPPEKPLPNRKGSTESSVYLRVASGPMPVHTTSKRPRVDPVLADRSATEMSDRGSALASLSPLRKASLSSSSSLGPKERQTGAAADIPQPAVRHQGPEPLLVVKPTHSSPEGGCREVPQAASKTHGLLQAISPQAQDKRPAVTSQPCPPAATHSLGLGSNLSFGPGAKRPAQAPIQACLNFPKKPRLGPFQIPESAIQGGELGAPEYLQPPPATTELGPSTSPQMGRRTPAQVSSVDRQPPHSRPCLPTAQACTMSHHPATSHDGAQPLRVLFRRLENGRWSSSLLAAPSFHSPEKPGAFLAQSPHVSEKSEVPRVRVPPNVLYEDLQVSSSSEDSDSDLE.

Disordered regions lie at residues methionine 1–leucine 42, proline 70–proline 293, proline 312–glutamine 390, and alanine 410–proline 442. Composition is skewed to basic and acidic residues over residues glycine 74 to lysine 83 and asparagine 97 to arginine 114. Low complexity predominate over residues serine 178–leucine 197.

This sequence belongs to the FAM90 family.

In Homo sapiens (Human), this protein is Protein FAM90A26.